Here is a 377-residue protein sequence, read N- to C-terminus: Outer membrane porin N (377 aa).

The first 21 residues, 1–21 (MKSKVLALLIPALLAAGAAHA), serve as a signal peptide directing secretion. Polar residues predominate over residues 175-189 (NNEGASNGQEGTNNG). A disordered region spans residues 175–196 (NNEGASNGQEGTNNGRDVRHEN).

The protein belongs to the Gram-negative porin family. Homotrimer.

It localises to the cell outer membrane. Functionally, forms pores that allow passive diffusion of small molecules across the outer membrane. Non-specific porin. This chain is Outer membrane porin N (ompN), found in Escherichia coli (strain K12).